The following is a 187-amino-acid chain: Calcium and integrin-binding family member 3 (187 aa).

3 EF-hand domains span residues 66–101 (KDNPFRQRIAQVFSEDGDGHMTLDNFLDMFSVMSEM), 103–138 (PRDLKAYYAFKIYDFNNDDYICAWDLEQTVTKLTRG), and 144–179 (EVSLVCEKVLDEADGDHDGRLSLEDFQNMILRAPDF). 10 residues coordinate Ca(2+): Asp116, Asn118, Asp120, Tyr122, Asp127, Asp157, Asp159, Asp161, Arg163, and Asp168.

As to quaternary structure, monomer and homodimer. Interacts with ITGA2B (via C-terminus cytoplasmic tail region); the interaction is stabilized/increased in a calcium and magnesium-dependent manner. Interacts with TMC1.

Acts a an auxiliary subunit of the sensory mechanoelectrical transduction (MET) channel in hair cells. Plays a role in regulating hair cell MET channel localization and function. In Homo sapiens (Human), this protein is Calcium and integrin-binding family member 3 (CIB3).